Reading from the N-terminus, the 1198-residue chain is Spindle-defective protein 5 (1198 aa).

The segment covering 1–10 (MEDNSVLNED) has biased composition (polar residues). A disordered region spans residues 1–45 (MEDNSVLNEDSNLEHVEGQPRRSMSQPVLNVEGDKRTSSTSATQQ). Coiled-coil stretches lie at residues 67-381 (EENK…QLTG), 566-603 (HDVA…FEEI), 694-916 (KFTS…LSTS), 983-1035 (DELC…ENVP), and 1127-1175 (KNET…EFQD).

The protein localises to the cytoplasm. The protein resides in the cytoskeleton. It localises to the microtubule organizing center. It is found in the centrosome. Plays a central role in centrosome maturation and mitotic spindle assembly during the first division of the zygote. Required for the centrosomal localization of air-1 and zyg-9. Probably not required in late embryogenesis and during larval development. This chain is Spindle-defective protein 5 (spd-5), found in Caenorhabditis elegans.